The primary structure comprises 164 residues: Probable metalloprotease y4qB (164 aa).

The MPN domain maps to 5–142 (IWIPESVVEA…WLPHAWIGQL (138 aa)). Residues histidine 89, histidine 91, and aspartate 103 each coordinate Zn(2+).

This sequence belongs to the peptidase M67B family.

This Sinorhizobium fredii (strain NBRC 101917 / NGR234) protein is Probable metalloprotease y4qB.